Consider the following 141-residue polypeptide: Large ribosomal subunit protein uL11 (141 aa).

This sequence belongs to the universal ribosomal protein uL11 family. As to quaternary structure, part of the ribosomal stalk of the 50S ribosomal subunit. Interacts with L10 and the large rRNA to form the base of the stalk. L10 forms an elongated spine to which L12 dimers bind in a sequential fashion forming a multimeric L10(L12)X complex. One or more lysine residues are methylated.

In terms of biological role, forms part of the ribosomal stalk which helps the ribosome interact with GTP-bound translation factors. This chain is Large ribosomal subunit protein uL11, found in Streptococcus mutans serotype c (strain ATCC 700610 / UA159).